The following is a 92-amino-acid chain: Putative septation protein SpoVG (92 aa).

This sequence belongs to the SpoVG family.

In terms of biological role, could be involved in septation. The sequence is that of Putative septation protein SpoVG from Clostridioides difficile (strain 630) (Peptoclostridium difficile).